Consider the following 569-residue polypeptide: Peroxynitrite isomerase THAP4 (569 aa).

The segment at 1 to 85 adopts a THAP-type zinc-finger fold; the sequence is MVICCAAVNC…LKPTAVPSIF (85 aa). The segment at 83–219 is disordered; the sequence is SIFHLSEKKR…GISMDDFTPP (137 aa). The span at 121-130 shows a compositional bias: polar residues; that stretch reads IGSSLSSSDN. Ser-159 carries the phosphoserine modification. Low complexity predominate over residues 196-210; the sequence is ASSSAADAGGADKSG. Residues 230–233 carry the HCFC1-binding motif (HBM) motif; sequence LHSY. Ser-234 bears the Phosphoserine mark. The interval 235 to 312 is disordered; the sequence is FSSKHTRERP…EAVQSEHSDA (78 aa). Over residues 242 to 262 the composition is skewed to basic and acidic residues; that stretch reads ERPSVPREPMDRKRLKRDIEP. Over residues 265 to 279 the composition is skewed to polar residues; the sequence is SGNSVAQSPPSSSLT. Over residues 280–289 the composition is skewed to low complexity; sequence ATPQKASQSP. Positions 407-569 are nitrobindin; sequence PPKLNPVVEP…LHITYKKVTP (163 aa). Residues Thr-436 and His-559 each contribute to the heme b site.

The protein in the C-terminal section; belongs to the nitrobindin family. As to quaternary structure, homodimer. Heme b serves as cofactor.

It is found in the cytoplasm. The protein resides in the nucleus. The catalysed reaction is peroxynitrite = nitrate. It functions in the pathway nitrogen metabolism. Heme-binding protein able to scavenge peroxynitrite and to protect free L-tyrosine against peroxynitrite-mediated nitration, by acting as a peroxynitrite isomerase that converts peroxynitrite to nitrate. Therefore, this protein likely plays a role in peroxynitrite sensing and in the detoxification of reactive nitrogen and oxygen species (RNS and ROS, respectively). Is able to bind nitric oxide (NO) in vitro, but may act as a sensor of peroxynitrite levels in vivo, possibly modulating the transcriptional activity residing in the N-terminal region. The chain is Peroxynitrite isomerase THAP4 from Rattus norvegicus (Rat).